The chain runs to 358 residues: WD repeat-containing protein 53 (358 aa).

WD repeat units lie at residues 8–47 (GHSSSILCLNANKDGLVASGGEGGDLVAWGEDGTPLGHMQ), 92–131 (VNEEEINCLSLNETESLLASADDSGAIKILDLEKKKVTRS), 134–174 (RHSN…PVWI), 195–234 (LNPALAHSVSVASCGNIFSCGAEDGKVRIFRVMGVKCERE), and 239–278 (GHTLGVSQVCFLPESSLLLTGGNDGRIRLWDVSGKMEKLQ). Positions 288 to 309 (KKAKRAACPTQGGNSRAPGAED) are disordered.

It belongs to the WD repeat WDR53 family.

The chain is WD repeat-containing protein 53 (Wdr53) from Mus musculus (Mouse).